Consider the following 209-residue polypeptide: Uracil phosphoribosyltransferase (209 aa).

5-phospho-alpha-D-ribose 1-diphosphate-binding positions include arginine 79, arginine 104, and 131 to 139 (DPMLATGNS). Residues isoleucine 194 and 199–201 (GDA) contribute to the uracil site. A 5-phospho-alpha-D-ribose 1-diphosphate-binding site is contributed by aspartate 200.

It belongs to the UPRTase family. The cofactor is Mg(2+).

The enzyme catalyses UMP + diphosphate = 5-phospho-alpha-D-ribose 1-diphosphate + uracil. It participates in pyrimidine metabolism; UMP biosynthesis via salvage pathway; UMP from uracil: step 1/1. Allosterically activated by GTP. Functionally, catalyzes the conversion of uracil and 5-phospho-alpha-D-ribose 1-diphosphate (PRPP) to UMP and diphosphate. In Delftia acidovorans (strain DSM 14801 / SPH-1), this protein is Uracil phosphoribosyltransferase.